The chain runs to 185 residues: Calcium-binding protein K-like (185 aa).

2 EF-hand domains span residues 60-95 and 96-131; these read WDEASMVRMFKLFDSDGNGVIDVKEFITALYMMTRA and PTTDKLGFLFDLFDSDKSGYLEAGEIEKLVNIVVVC. The Ca(2+) site is built by Asp73, Asp75, Asn77, Glu84, Asp109, Asp111, Ser113, Tyr115, and Glu120.

The protein belongs to the recoverin family.

This Dictyostelium discoideum (Social amoeba) protein is Calcium-binding protein K-like.